The chain runs to 67 residues: UPF0434 protein Bphy_0537 (67 aa).

The protein belongs to the UPF0434 family.

This chain is UPF0434 protein Bphy_0537, found in Paraburkholderia phymatum (strain DSM 17167 / CIP 108236 / LMG 21445 / STM815) (Burkholderia phymatum).